Consider the following 968-residue polypeptide: Phosphoenolpyruvate carboxylase (968 aa).

At serine 11 the chain carries Phosphoserine. Residues histidine 172 and lysine 602 contribute to the active site.

Belongs to the PEPCase type 1 family. Homotetramer. Mg(2+) is required as a cofactor.

The protein localises to the cytoplasm. The catalysed reaction is oxaloacetate + phosphate = phosphoenolpyruvate + hydrogencarbonate. With respect to regulation, by light-reversible phosphorylation. Its function is as follows. Through the carboxylation of phosphoenolpyruvate (PEP) it forms oxaloacetate, a four-carbon dicarboxylic acid source for the tricarboxylic acid cycle. This Phaseolus vulgaris (Kidney bean) protein is Phosphoenolpyruvate carboxylase.